Consider the following 546-residue polypeptide: CTP synthase (546 aa).

The segment at 1–266 (MTTNYIFVTG…DDLVCQRFGI (266 aa)) is amidoligase domain. Ser-14 is a CTP binding site. Ser-14 serves as a coordination point for UTP. ATP-binding positions include 15-20 (SLGKGI) and Asp-72. Mg(2+) is bound by residues Asp-72 and Glu-140. CTP is bound by residues 147–149 (DIE), 187–192 (KTKPTQ), and Lys-223. UTP-binding positions include 187-192 (KTKPTQ) and Lys-223. Residue 239-241 (KDV) participates in ATP binding. In terms of domain architecture, Glutamine amidotransferase type-1 spans 291 to 542 (VIGMVGKYIE…VKAAGESVRG (252 aa)). Gly-352 provides a ligand contact to L-glutamine. Cys-379 acts as the Nucleophile; for glutamine hydrolysis in catalysis. Residues 380–383 (LGMQ), Glu-403, and Arg-470 contribute to the L-glutamine site. Residues His-515 and Glu-517 contribute to the active site.

The protein belongs to the CTP synthase family. In terms of assembly, homotetramer.

The catalysed reaction is UTP + L-glutamine + ATP + H2O = CTP + L-glutamate + ADP + phosphate + 2 H(+). The enzyme catalyses L-glutamine + H2O = L-glutamate + NH4(+). It carries out the reaction UTP + NH4(+) + ATP = CTP + ADP + phosphate + 2 H(+). It participates in pyrimidine metabolism; CTP biosynthesis via de novo pathway; CTP from UDP: step 2/2. With respect to regulation, allosterically activated by GTP, when glutamine is the substrate; GTP has no effect on the reaction when ammonia is the substrate. The allosteric effector GTP functions by stabilizing the protein conformation that binds the tetrahedral intermediate(s) formed during glutamine hydrolysis. Inhibited by the product CTP, via allosteric rather than competitive inhibition. Functionally, catalyzes the ATP-dependent amination of UTP to CTP with either L-glutamine or ammonia as the source of nitrogen. Regulates intracellular CTP levels through interactions with the four ribonucleotide triphosphates. This is CTP synthase from Aliivibrio fischeri (strain MJ11) (Vibrio fischeri).